The following is a 383-amino-acid chain: uncharacterized protein (383 aa).

The protein belongs to the peptidase M20 family.

This is an uncharacterized protein from Staphylococcus aureus (strain N315).